The chain runs to 255 residues: Proteasome subunit alpha (255 aa).

A disordered region spans residues 228 to 255 (LLASPAGTSGPTGEPGPAGTAATDGGDL). Residues 232–255 (PAGTSGPTGEPGPAGTAATDGGDL) are compositionally biased toward low complexity.

The protein belongs to the peptidase T1A family. As to quaternary structure, the 20S proteasome core is composed of 14 alpha and 14 beta subunits that assemble into four stacked heptameric rings, resulting in a barrel-shaped structure. The two inner rings, each composed of seven catalytic beta subunits, are sandwiched by two outer rings, each composed of seven alpha subunits. The catalytic chamber with the active sites is on the inside of the barrel. Has a gated structure, the ends of the cylinder being occluded by the N-termini of the alpha-subunits. Is capped by the proteasome-associated ATPase, ARC.

It localises to the cytoplasm. Its pathway is protein degradation; proteasomal Pup-dependent pathway. With respect to regulation, the formation of the proteasomal ATPase ARC-20S proteasome complex, likely via the docking of the C-termini of ARC into the intersubunit pockets in the alpha-rings, may trigger opening of the gate for substrate entry. Interconversion between the open-gate and close-gate conformations leads to a dynamic regulation of the 20S proteasome proteolysis activity. In terms of biological role, component of the proteasome core, a large protease complex with broad specificity involved in protein degradation. The polypeptide is Proteasome subunit alpha (Sanguibacter keddieii (strain ATCC 51767 / DSM 10542 / NCFB 3025 / ST-74)).